A 184-amino-acid chain; its full sequence is Photosystem I assembly protein Ycf4 (184 aa).

2 helical membrane passes run 19–39 and 57–77; these read ISNL…VLVG and IIFF…LFIS.

Belongs to the Ycf4 family.

The protein resides in the plastid thylakoid membrane. Its function is as follows. Seems to be required for the assembly of the photosystem I complex. The sequence is that of Photosystem I assembly protein Ycf4 from Cuscuta reflexa (Southern Asian dodder).